The following is a 128-amino-acid chain: Cyclic ether formation enzyme gkaZ (128 aa).

The N-terminal stretch at 1-36 (MTTARALSDGLAYLLACFNAFCIQAHLTSRFSPAFS) is a signal peptide. The next 2 membrane-spanning stretches (helical) occupy residues 61 to 81 (LRYMFVSLNAGLGLLLALPGW) and 107 to 127 (WLLHFLSHLVLLSITMAAIYV).

It belongs to the cyclic ether formation enzyme xenC family.

It is found in the membrane. It functions in the pathway mycotoxin biosynthesis. In terms of biological role, cyclic ether formation enzyme; part of the gene cluster that mediates the biosynthesis of GKK1032, fungal natural products containing a macrocyclic para-cyclophane connected to a decahydrofluorene ring system that show potent antitumor activities. Within the pathway, gkaZ functions synergistically with gkaB and gkaX to form the cyclophane. The pathway begins with the PKS-NRPS gkaA which, with the help of the trans-enoyl reductase gkaC, synthesizes the polyketide-tyrosyl acyl thioester product which can be reductively off-loaded by the terminal reductase (R) domain in gkaA. The alpha/beta hydrolase gkaG is then required to catalyze the subsequent Knoevenagel condensation that affords the 3-pyrrolin-2-one ring, whereas the three proteins gkaB, gkaX and gkaZ then function synergistically to form the cyclophane. The polypeptide is Cyclic ether formation enzyme gkaZ (Penicillium citrinum).